The sequence spans 1367 residues: Histone acetyltransferase HAC2 (1367 aa).

Residues 110-151 are disordered; the sequence is TSSIPGSSGSASETNSGSDITKQDFKNDSPSDSKKVQGSSTS. The span at 111-127 shows a compositional bias: low complexity; that stretch reads SSIPGSSGSASETNSGS. The segment covering 130–144 has biased composition (basic and acidic residues); it reads TKQDFKNDSPSDSKK. Tandem repeats lie at residues 188 to 200, 223 to 235, 251 to 263, 286 to 298, 314 to 326, 349 to 361, 377 to 389, 418 to 430, 432 to 444, 459 to 471, 473 to 485, and 500 to 512. The 12 X 13 AA approximate repeats stretch occupies residues 188–512; that stretch reads KLGTVVDIVE…IGVDIVEPMK (325 aa). The PHD-type zinc-finger motif lies at 688-765; the sequence is HQICSPCHSR…EYICPTCLLE (78 aa). The 434-residue stretch at 780–1213 folds into the CBP/p300-type HAT domain; the sequence is DSGAKDLPET…ILHHLHTSNK (434 aa). Residues 903–905, 922–923, and Trp978 each bind acetyl-CoA; these read LDS and RT. Residues 1094 to 1157 form a ZZ-type 1; degenerate zinc finger; that stretch reads ELNYSCTRCS…QLSKVQVNGV (64 aa). Zn(2+)-binding residues include Cys1099, Cys1102, Cys1123, Cys1126, Cys1225, Cys1228, Cys1240, Cys1243, Cys1249, Cys1252, His1261, and His1263. The ZZ-type 2 zinc-finger motif lies at 1220–1273; it reads SSSLTCTACKKDVSTTIYFPCLLCPDYRACTGCYTKNRTLRHLHIFPTLPSANR. A TAZ-type zinc finger spans residues 1274-1359; that stretch reads APSRTVMVLE…NCPVPQCRDR (86 aa).

As to expression, rosette leaves, stems and flowers.

The protein localises to the nucleus. The catalysed reaction is L-lysyl-[protein] + acetyl-CoA = N(6)-acetyl-L-lysyl-[protein] + CoA + H(+). Acetyltransferase enzyme. Acetylates histones, giving a specific tag for transcriptional activation. No acetyltransferase activity found in vitro. The sequence is that of Histone acetyltransferase HAC2 (HAC2) from Arabidopsis thaliana (Mouse-ear cress).